The following is a 230-amino-acid chain: Type 4 apparatus protein DotY (230 aa).

Residues 202-230 (EPKALETKREEIRQEIESGAEAPTTQSIR) form a disordered region. The span at 204–217 (KALETKREEIRQEI) shows a compositional bias: basic and acidic residues.

The T4BSS is a complex nanomachine composed of several subcomplexes. This subunit is part of the Type IV Coupling Complex (T4CC), a subcomplex composed of the DotLMNYZ core and the IcmSW-LvgA adapter subunits, linked by the C-terminal tail of DotL. Six DotLMNYZ hetero-pentameric units may assemble into a hexameric nanomachine, forming an inner membrane channel for effectors to pass through. Interacts exclusively with DotZ. DotY and DotZ are co-dependent for the assembly into the T4CC.

Its subcellular location is the cytoplasm. Component of the Dot/Icm type IVB secretion system (T4BSS), which is used to inject bacterial effector proteins into eukaryotic host cells. Part of a subcomplex which recruits effector proteins and delivers them to the core transmembrane subcomplex. DotY and DotZ play a role in effector translocation, but are not essential and do not influence the stability of the subcomplex main components. The DotY/DotZ main function is to optimize secretion by modulating the delivery trajectory of the IcmSW module and the localization of the machinery to the poles. The protein is Type 4 apparatus protein DotY of Legionella pneumophila subsp. pneumophila (strain Philadelphia 1 / ATCC 33152 / DSM 7513).